A 206-amino-acid chain; its full sequence is Probable chemoreceptor glutamine deamidase CheD (206 aa).

Belongs to the CheD family.

The enzyme catalyses L-glutaminyl-[protein] + H2O = L-glutamyl-[protein] + NH4(+). In terms of biological role, probably deamidates glutamine residues to glutamate on methyl-accepting chemotaxis receptors (MCPs), playing an important role in chemotaxis. The protein is Probable chemoreceptor glutamine deamidase CheD of Laribacter hongkongensis (strain HLHK9).